The primary structure comprises 158 residues: Methylglyoxal synthase (158 aa).

The 158-residue stretch at 1 to 158 (MRRKLRIALV…AFEESLKVKE (158 aa)) folds into the MGS-like domain. Substrate is bound by residues His12, Lys16, 38–41 (TGTT), and 63–64 (SG). Asp69 functions as the Proton donor/acceptor in the catalytic mechanism. His96 contacts substrate.

The protein belongs to the methylglyoxal synthase family.

It catalyses the reaction dihydroxyacetone phosphate = methylglyoxal + phosphate. In terms of biological role, catalyzes the formation of methylglyoxal from dihydroxyacetone phosphate. The chain is Methylglyoxal synthase from Treponema socranskii.